We begin with the raw amino-acid sequence, 1024 residues long: Gamma-tubulin complex component 5 (1024 aa).

Disordered regions lie at residues isoleucine 153–glutamine 203, asparagine 523–glutamine 545, and serine 853–lysine 873. A compositionally biased stretch (basic and acidic residues) spans threonine 189 to arginine 198. Positions aspartate 529–serine 543 are enriched in low complexity. Residues serine 853–aspartate 864 are compositionally biased toward basic and acidic residues.

The protein belongs to the TUBGCP family. Component of the gamma-tubulin ring complex (gTuRC) consisting of TUBGCP2, TUBGCP3, TUBGCP4, TUBGCP5 and TUBGCP6 and gamma-tubulin TUBG1 or TUBG2. TUBGCP2, TUBGCP3, TUBGCP4, TUBGCP5 and TUBGCP6 assemble in a 5:5:2:1:1 stoichiometry; each is associated with a gamma-tubulin, thereby arranging 14 gamma-tubulins in a helical manner. Gamma-tubulin at the first position is blocked by TUBGCP3 at the last position, allowing 13 protafilaments to grow into a microtubule. The gTuRC (via TUBGCP3 and TUBGCP6) interacts with ACTB and MZT1; the interactions form a luminal bridge that stabilizes the initial structure during complex assembly. The gTuRC (via TUBGCP2) interacts with MZT2A/MZT2B and CDK5RAP2 (via CM1 motif); the interactions play a role in gTuRC activation.

Its subcellular location is the cytoplasm. It localises to the cytoskeleton. The protein resides in the microtubule organizing center. The protein localises to the centrosome. In terms of biological role, component of the gamma-tubulin ring complex (gTuRC) which mediates microtubule nucleation. The gTuRC regulates the minus-end nucleation of alpha-beta tubulin heterodimers that grow into microtubule protafilaments, a critical step in centrosome duplication and spindle formation. The polypeptide is Gamma-tubulin complex component 5 (Tubgcp5) (Mus musculus (Mouse)).